The sequence spans 533 residues: MDYVPWIGNGYRYGKNHRGVDDITAPKTGAGSSSGTSTNTSGSRSFLPTFSNVGVGLKANVQATLGGSQTTTTGGSKWPTLDQANLLLWTGSGWRNDKNGQSDENHTTFKSATGSGQQGGSSGTSAGNPDSLKQDKISKSGDSLSVVDTGQGDDTHYANLPPSITPTSDWPNALSFTNKNNAQRVQLFLRGLLDSIPVLVNKSGQDDNSKFKAEHQKWKYSDFKSDQTKLNLPAYGEVNGLLNPALVETYFGTTRAGGSGNQNRTTVPGIGFKIPEQNNDSKAVLITPGLAWTPQDVGNLVVSGTTVSFQLGGWLVTFTDFVKPRSGYLGLQLTGLDVSEATQRELIWAPRPWAAFRGSWVNRLGRVESVWDFKGVWADQAHSAVSESQAATSGTTTATGAALPEHPNALAFQVSVVEASAYKPNTSSGQTQSTNSSPYLHLIQPKKVTQSDKLDDDLKNLLDPNEVRARMLQSFGTENSTQAQPQSLKTTTPVFGAMSGTSAVCLVVGVPRRAQAQVNLAWISPPLNGWVGH.

2 disordered regions span residues 15 to 45 and 92 to 166; these read KNHR…GSRS and SGWR…SITP. Positions 28–45 are enriched in low complexity; it reads TGAGSSSGTSTNTSGSRS. The segment covering 95–107 has biased composition (basic and acidic residues); that stretch reads RNDKNGQSDENHT.

Belongs to the adhesin P1 family.

The polypeptide is Putative adhesin P1-like protein MPN_409 (Mycoplasma pneumoniae (strain ATCC 29342 / M129 / Subtype 1) (Mycoplasmoides pneumoniae)).